A 1107-amino-acid polypeptide reads, in one-letter code: Integrator complex subunit 6 homolog (1107 aa).

The VWFA domain maps to 2–195; that stretch reads LITFVVDTSG…LPMEPAIAPM (194 aa). 5 disordered regions span residues 454–515, 542–572, 629–801, 818–861, and 946–1034; these read RIIN…SGNL, DNETSENSELSQELSESSTTGSSGGGSSSNI, TLRD…VSSP, QISS…IVNN, and VVRP…TTPN. Composition is skewed to low complexity over residues 460–513 and 546–562; these read QQQQ…SGSG and SENSELSQELSESSTTG. Residues 629–639 show a composition bias toward basic and acidic residues; the sequence is TLRDIDDDKKP. Residues 693 to 801 are compositionally biased toward low complexity; it reads PSLPTLNSLS…PIPSTTVSSP (109 aa). The span at 846 to 857 shows a compositional bias: pro residues; it reads SPPPPPPPPPLP. The segment covering 956–975 has biased composition (low complexity); it reads PLTIDTLTSSSSSSTIPTTT. Residues 976-996 show a composition bias toward polar residues; the sequence is NGSLSTHDTPNTSPTLSSINY. Over residues 997–1034 the composition is skewed to low complexity; sequence NNNNNNNNNNNNNNNNNNNNNNNNNNRKNSIITTTTPN. The region spanning 1041 to 1103 is the MIF4G domain; it reads IKFVHKEIRR…SLISKLIGYI (63 aa).

It belongs to the Integrator subunit 6 family. Component of the Integrator complex. The core complex associates with protein phosphatase 2A subunits, to form the Integrator-PP2A (INTAC) complex.

It localises to the nucleus. It is found in the chromosome. Its function is as follows. Component of the integrator complex, a multiprotein complex that terminates RNA polymerase II (Pol II) transcription in the promoter-proximal region of genes. The integrator complex provides a quality checkpoint during transcription elongation by driving premature transcription termination of transcripts that are unfavorably configured for transcriptional elongation: the complex terminates transcription by (1) catalyzing dephosphorylation of the C-terminal domain (CTD) of Pol II subunit polr2a, (2) degrading the exiting nascent RNA transcript via endonuclease activity and (3) promoting the release of Pol II from bound DNA. The integrator complex is also involved in terminating the synthesis of non-coding Pol II transcripts, such as enhancer RNAs (eRNAs), small nuclear RNAs (snRNAs), telomerase RNAs and long non-coding RNAs (lncRNAs). Within the integrator complex, INTS6 acts as a molecular adapter that promotes assembly of protein phosphatase 2A (PP2A) subunits to the integrator core complex, promoting recruitment of PP2A to transcription pause-release checkpoint. This chain is Integrator complex subunit 6 homolog (ints6), found in Dictyostelium discoideum (Social amoeba).